A 484-amino-acid chain; its full sequence is Maintenance of mitochondrial morphology protein 1 (484 aa).

Residues 1-22 (MSFQQSETVPVPAQSSLSFTQG) are Lumenal-facing. The chain crosses the membrane as a helical span at residues 23–43 (FLLGQLSVVLLIGAFIKFFIF). The Cytoplasmic segment spans residues 44–484 (GEAPPPPSRG…PGSLSGAAAR (441 aa)). Disordered regions lie at residues 50-98 (PSRG…SSST), 272-319 (STPP…TGSP), and 388-484 (RTGV…AAAR). Residues 54–64 (LSHRASTHRRS) show a composition bias toward basic residues. 2 stretches are compositionally biased toward polar residues: residues 65-78 (NSIY…ANNR) and 85-98 (SNSN…SSST). In terms of domain architecture, SMP-LTD spans 130 to 380 (QPESLDWFNV…EPRVQVVGLP (251 aa)). A compositionally biased stretch (pro residues) spans 272-286 (STPPLHTPSPSPSPP). The segment covering 399 to 408 (TGSNAASRSA) has biased composition (polar residues). Residues 413–427 (LGDHHLGDREPEGLR) show a composition bias toward basic and acidic residues. 2 stretches are compositionally biased toward polar residues: residues 437-449 (QFDS…SYNV) and 466-476 (GALSEQFQMPG).

It belongs to the MMM1 family. Homodimer. Component of the ER-mitochondria encounter structure (ERMES) or MDM complex, composed of mmm1, mdm10, mdm12 and mdm34. A mmm1 homodimer associates with one molecule of mdm12 on each side in a pairwise head-to-tail manner, and the SMP-LTD domains of mmm1 and mdm12 generate a continuous hydrophobic tunnel for phospholipid trafficking.

It localises to the endoplasmic reticulum membrane. Component of the ERMES/MDM complex, which serves as a molecular tether to connect the endoplasmic reticulum (ER) and mitochondria. Components of this complex are involved in the control of mitochondrial shape and protein biogenesis, and function in nonvesicular lipid trafficking between the ER and mitochondria. The mdm12-mmm1 subcomplex functions in the major beta-barrel assembly pathway that is responsible for biogenesis of all outer membrane beta-barrel proteins, and acts in a late step after the SAM complex. The mdm10-mdm12-mmm1 subcomplex further acts in the TOM40-specific pathway after the action of the mdm12-mmm1 complex. Essential for establishing and maintaining the structure of mitochondria and maintenance of mtDNA nucleoids. This is Maintenance of mitochondrial morphology protein 1 from Aspergillus niger (strain ATCC MYA-4892 / CBS 513.88 / FGSC A1513).